The following is a 102-amino-acid chain: Defensin-like protein 285 (102 aa).

The signal sequence occupies residues 1–28 (MTNLYFKTAFLLSLLLLSFSYQSKLIEA). Disulfide bonds link Cys39–Cys100, Cys64–Cys83, Cys70–Cys88, and Cys75–Cys90.

It belongs to the DEFL family.

The protein resides in the secreted. This is Defensin-like protein 285 from Arabidopsis thaliana (Mouse-ear cress).